We begin with the raw amino-acid sequence, 61 residues long: Odorranain-A6 (61 aa).

Positions 1–22 (MFSMKKSLLLLFFLGTISLSLC) are cleaved as a signal peptide. Positions 23 to 45 (EQERDAEEEEGSENGAEDIKINR) are excised as a propeptide.

This sequence belongs to the frog skin active peptide (FSAP) family. Brevinin subfamily. As to expression, expressed by the skin glands.

The protein localises to the secreted. The protein is Odorranain-A6 of Odorrana hainanensis (Odor frog).